The sequence spans 109 residues: Nucleoid-associated protein MADE_1013280 (109 aa).

The segment at 86-109 (TSKEKMGDVTGGMPLPPGFKMPGF) is disordered. The segment covering 99-109 (PLPPGFKMPGF) has biased composition (pro residues).

This sequence belongs to the YbaB/EbfC family. As to quaternary structure, homodimer.

The protein localises to the cytoplasm. Its subcellular location is the nucleoid. Binds to DNA and alters its conformation. May be involved in regulation of gene expression, nucleoid organization and DNA protection. In Alteromonas mediterranea (strain DSM 17117 / CIP 110805 / LMG 28347 / Deep ecotype), this protein is Nucleoid-associated protein MADE_1013280.